We begin with the raw amino-acid sequence, 556 residues long: MDEFDGFTRPTSSNSSANRNSNNSMNRVENNNSNSDSANTVDSRGDAHTRMRQGFEKSFPSSPNKKRPRTNEGDRFIPSRDASTELWTGFTKVEGPLTPVKKKQSVADRNFTTLLRSELFGSNDETFNNSPIATPNTTIGVSTPRTDSGIDDIELTQRTPPSSSHTSSSILQNTPVTPSRKIFHYLSPRDRNKSSYGKKAQYQDNPNRTIYSLSPVRSITKDLISASRLEGRELPSIPYRVLDAPGLAGDFYLNLLDWGQCNMLAVALASRVYLWSGISSEVTVMHNFYPTDTVTSLRWVQRGTHLAVGTHNGSVEIWDAATCKKTRTMSGHTERVGALSWNDHVLSSGGRDNHILHRDVRAPEHYFRVLTAHRQEVCGLEWNSNENLLASGGNDNALMVWDKFEEKPLYSFHNHIAAVKAITWSPHQRGILASGGGTADRTIKLWNTQRGSMLHNIDTGSQVCNLLWSKQTNEFISTHGFMENEVALWNYPSVSRVGTLKGHTDRVLYLAMSPNGENIVTGAADETLRFWKLFDSKSKHSASTMSSPFDPTMKIR.

Residues Met1–Arg80 are disordered. Residues Ser12 to Ser37 are compositionally biased toward low complexity. A compositionally biased stretch (basic and acidic residues) spans Ser43–Phe55. A Phosphoserine modification is found at Ser62. Residues Arg69–Pro78 are compositionally biased toward basic and acidic residues. The residue at position 98 (Thr98) is a Phosphothreonine. A compositionally biased stretch (polar residues) spans Thr126–Thr146. The segment at Thr126 to Asn173 is disordered. Positions Thr159 to Ser169 are enriched in low complexity. Position 177 is a phosphothreonine (Thr177). A phosphoserine mark is found at Ser187 and Ser214. WD repeat units lie at residues Gly246–Met285, Tyr289–Thr328, Gly331–Arg368, Ala372–Ser411, Asn414–Asn456, Asp458–Thr499, and Gly502–Ser541.

The protein belongs to the WD repeat CDC20/Fizzy family. Phosphorylated by cdc2-cdc13-CDK complex. This targets srw1 for proteolysis which in turn promotes cdc13 turnover. Dephosphorylated during G1 arrest.

Its subcellular location is the nucleus. Functionally, has a role in cell differentiation and cell cycling by negatively regulating cig2 and cdc12-associated cdc2. Down-regulates the level of cdc13, particularly in a nitrogen deprived environment. Regulator of cell cycle G1 phase progression. Prevents onset of mitosis during the pre-Start G1 period. Required for degradation of cdc13 mitotic cyclin B during G1 arrest but not during mitotic exit. The protein is WD repeat-containing protein srw1 (srw1) of Schizosaccharomyces pombe (strain 972 / ATCC 24843) (Fission yeast).